Here is a 352-residue protein sequence, read N- to C-terminus: MLTLSDFDFPLPPELIAQSALPDRSASRLLVVERLAPADTADAVRMVDRAFSDIVDYLRPDDLLVFNDTRVIKARFFGHKPSGGKIEVLVERVVDSHTVLAQVRASKTPTEGSILHLADGAFAVTVGPRVDQFFTLRFPEPALDLIERYGRLPLPPYIRHDPDAYDETRYQTVYARSPGAVAAPTAGLHFDDALFARLNAAGVRRAFLTLHVGAGTFQPVRTENLAEHKMHSEWYAVSADLAQAVRDTRARGGRVIAVGTTSLRALESAAQADGTLAAGSGDTDIFITPGYRFRLVDALITNFHLPKSTLLMLVSALAGVEAIRAAYRHAVEQRYRFFSYGDAMLLTRQPGA.

The protein belongs to the QueA family. In terms of assembly, monomer.

The protein resides in the cytoplasm. It carries out the reaction 7-aminomethyl-7-carbaguanosine(34) in tRNA + S-adenosyl-L-methionine = epoxyqueuosine(34) in tRNA + adenine + L-methionine + 2 H(+). It functions in the pathway tRNA modification; tRNA-queuosine biosynthesis. Its function is as follows. Transfers and isomerizes the ribose moiety from AdoMet to the 7-aminomethyl group of 7-deazaguanine (preQ1-tRNA) to give epoxyqueuosine (oQ-tRNA). The chain is S-adenosylmethionine:tRNA ribosyltransferase-isomerase from Cupriavidus necator (strain ATCC 17699 / DSM 428 / KCTC 22496 / NCIMB 10442 / H16 / Stanier 337) (Ralstonia eutropha).